Consider the following 245-residue polypeptide: Probable transcriptional regulatory protein NSE_0641 (245 aa).

Residues 1–22 (MAGHSQYANIKHRKNAQDAKRA) form a disordered region.

It belongs to the TACO1 family.

The protein localises to the cytoplasm. The protein is Probable transcriptional regulatory protein NSE_0641 of Neorickettsia sennetsu (strain ATCC VR-367 / Miyayama) (Ehrlichia sennetsu).